The sequence spans 187 residues: Orotate phosphoribosyltransferase (187 aa).

5-phospho-alpha-D-ribose 1-diphosphate is bound by residues R98, K99, K102, H104, and 128 to 136 (EDVTTTGGS). Orotate contacts are provided by T132 and R160.

It belongs to the purine/pyrimidine phosphoribosyltransferase family. PyrE subfamily. In terms of assembly, homodimer. It depends on Mg(2+) as a cofactor.

It catalyses the reaction orotidine 5'-phosphate + diphosphate = orotate + 5-phospho-alpha-D-ribose 1-diphosphate. It participates in pyrimidine metabolism; UMP biosynthesis via de novo pathway; UMP from orotate: step 1/2. Functionally, catalyzes the transfer of a ribosyl phosphate group from 5-phosphoribose 1-diphosphate to orotate, leading to the formation of orotidine monophosphate (OMP). This chain is Orotate phosphoribosyltransferase, found in Rhodopseudomonas palustris (strain BisB18).